Reading from the N-terminus, the 226-residue chain is Prolactin (226 aa).

A signal peptide spans 1 to 29 (MNSQGSDRKAVTLLLLVMSNLLFCQNAHP). The cysteines at positions 33 and 38 are disulfide-linked. Ser53 and Ser117 each carry phosphoserine. 2 disulfide bridges follow: Cys85/Cys201 and Cys218/Cys226.

It belongs to the somatotropin/prolactin family. As to quaternary structure, interacts with PRLR.

It is found in the secreted. Functionally, prolactin acts primarily on the mammary gland by promoting lactation. In Mesocricetus auratus (Golden hamster), this protein is Prolactin (PRL).